Here is a 798-residue protein sequence, read N- to C-terminus: MPGAASIVAVLAALLPTALGQANQSYVDYNIEANPDLFSECLETGGTSFPDCESGPLSKTLVCDTSAKPHDRAAALVSLLTFEELVNNTANTGHGAPRIGLPAYQVWNEALHGVAHADFSDAGGFSWSTSFPQPISTMAALNRTLIHQIATIISTQGRAFMNAGRYGLDVYSPNINTFRHPVWGRGQETPGEDAYCLASTYAYEYITGIQGGVDANPLKLIATAKHYAGYDIENWDNHSRLGNDMQITQQDLAEYYTPQFLVASRDAKVHSVMCSYNAVNGVPSCSNSFFLQTLLRDTFDFVEDGYVSGDCGAVYNVFNPHGYATNESSAAADSIRAGTDIDCGVSYPRHFQESFHDQEVSRQDLERGVTRLYASLIRAGYFDGKTSPYRNITWSDVVSTNAQNLSYEAAAQSIVLLKNDGILPLTSTSSSTKTIALIGPWANATTQMLGNYYGPAPYLISPLQAFQDSEYKITYTIGTNTTTDPDSTSQSTALTTAKEADLIIFAGGIDNTLETEAQDRSNITWPSNQLSLITKLADLGKPLIVLQMGGGQVDSSALKNNKNVNALIWGGYPGQSGGQALADIITGKRAPAARLVTTQYPAEYAEVFPAIDMNLRPNGSNPGQTYMWYTGTPVYEFGHGLFYTNFTASASASSGTKNRTSFNIDEVLGRPHLGYKLVEQMPLLNFTVDVKNTGDRVSDYTAMAFVNTTAGPAPHPNKWLVGFDRLSAVEPGSAKTMVIPVTVDSLARTDEEGNRVLYPGRYEVALNNEREVVLGFTLTGEKAVLFKWPKEEQLIAPQ.

Residues 1–20 form the signal peptide; sequence MPGAASIVAVLAALLPTALG. N23, N87, N142, and N237 each carry an N-linked (GlcNAc...) asparagine glycan. D310 is an active-site residue. N326, N391, N404, N443, N480, N522, N618, N645, N658, N685, and N707 each carry an N-linked (GlcNAc...) asparagine glycan.

Belongs to the glycosyl hydrolase 3 family.

It localises to the secreted. It carries out the reaction Hydrolysis of (1-&gt;4)-beta-D-xylans, to remove successive D-xylose residues from the non-reducing termini.. It functions in the pathway glycan degradation; xylan degradation. Functionally, xylan 1,4-beta-xylosidase involved in the hydrolysis of xylan, a major structural heterogeneous polysaccharide found in plant biomass representing the second most abundant polysaccharide in the biosphere, after cellulose. This is Exo-1,4-beta-xylosidase xlnD (xlnD) from Aspergillus oryzae (strain ATCC 42149 / RIB 40) (Yellow koji mold).